Reading from the N-terminus, the 127-residue chain is Putative defensin-like protein 180 (127 aa).

An N-terminal signal peptide occupies residues 1–26; that stretch reads MERITSLVFFASFLIIFVSGVNQTRA. 8 cysteine pairs are disulfide-bonded: cysteine 29–cysteine 70, cysteine 36–cysteine 55, cysteine 39–cysteine 64, cysteine 43–cysteine 66, cysteine 81–cysteine 127, cysteine 92–cysteine 112, cysteine 97–cysteine 121, and cysteine 101–cysteine 123.

The protein belongs to the DEFL family.

Its subcellular location is the secreted. The polypeptide is Putative defensin-like protein 180 (LCR58) (Arabidopsis thaliana (Mouse-ear cress)).